The following is a 459-amino-acid chain: Siroheme synthase (459 aa).

The segment at 1–204 is precorrin-2 dehydrogenase /sirohydrochlorin ferrochelatase; the sequence is MDHLPIFCQL…ADEKAVNATT (204 aa). NAD(+)-binding positions include 22 to 23 and 43 to 44; these read DV and LT. Position 128 is a phosphoserine (serine 128). Positions 216-459 are uroporphyrinogen-III C-methyltransferase; sequence GEVVLVGAGP…KLNWFSNYYD (244 aa). Proline 225 provides a ligand contact to S-adenosyl-L-methionine. The Proton acceptor role is filled by aspartate 248. Catalysis depends on lysine 270, which acts as the Proton donor. S-adenosyl-L-methionine contacts are provided by residues 301–303, isoleucine 306, 331–332, methionine 382, and glycine 411; these read GGD and TA.

This sequence in the N-terminal section; belongs to the precorrin-2 dehydrogenase / sirohydrochlorin ferrochelatase family. It in the C-terminal section; belongs to the precorrin methyltransferase family.

It carries out the reaction uroporphyrinogen III + 2 S-adenosyl-L-methionine = precorrin-2 + 2 S-adenosyl-L-homocysteine + H(+). The catalysed reaction is precorrin-2 + NAD(+) = sirohydrochlorin + NADH + 2 H(+). It catalyses the reaction siroheme + 2 H(+) = sirohydrochlorin + Fe(2+). It participates in cofactor biosynthesis; adenosylcobalamin biosynthesis; precorrin-2 from uroporphyrinogen III: step 1/1. It functions in the pathway cofactor biosynthesis; adenosylcobalamin biosynthesis; sirohydrochlorin from precorrin-2: step 1/1. The protein operates within porphyrin-containing compound metabolism; siroheme biosynthesis; precorrin-2 from uroporphyrinogen III: step 1/1. Its pathway is porphyrin-containing compound metabolism; siroheme biosynthesis; siroheme from sirohydrochlorin: step 1/1. It participates in porphyrin-containing compound metabolism; siroheme biosynthesis; sirohydrochlorin from precorrin-2: step 1/1. In terms of biological role, multifunctional enzyme that catalyzes the SAM-dependent methylations of uroporphyrinogen III at position C-2 and C-7 to form precorrin-2 via precorrin-1. Then it catalyzes the NAD-dependent ring dehydrogenation of precorrin-2 to yield sirohydrochlorin. Finally, it catalyzes the ferrochelation of sirohydrochlorin to yield siroheme. The sequence is that of Siroheme synthase from Salmonella agona (strain SL483).